Consider the following 61-residue polypeptide: Small ribosomal subunit protein uS14 (61 aa).

Positions 24, 27, 40, and 43 each coordinate Zn(2+).

The protein belongs to the universal ribosomal protein uS14 family. Zinc-binding uS14 subfamily. As to quaternary structure, part of the 30S ribosomal subunit. Contacts proteins S3 and S10. Requires Zn(2+) as cofactor.

Its function is as follows. Binds 16S rRNA, required for the assembly of 30S particles and may also be responsible for determining the conformation of the 16S rRNA at the A site. The protein is Small ribosomal subunit protein uS14 of Caldanaerobacter subterraneus subsp. tengcongensis (strain DSM 15242 / JCM 11007 / NBRC 100824 / MB4) (Thermoanaerobacter tengcongensis).